Reading from the N-terminus, the 350-residue chain is UDP-N-acetylenolpyruvoylglucosamine reductase (350 aa).

The FAD-binding PCMH-type domain maps to 24–195; that stretch reads HVEATARWLL…VAVEFNLPLL (172 aa). The active site involves arginine 172. Serine 245 acts as the Proton donor in catalysis. The active site involves glutamate 342.

The protein belongs to the MurB family. FAD is required as a cofactor.

The protein localises to the cytoplasm. The enzyme catalyses UDP-N-acetyl-alpha-D-muramate + NADP(+) = UDP-N-acetyl-3-O-(1-carboxyvinyl)-alpha-D-glucosamine + NADPH + H(+). Its pathway is cell wall biogenesis; peptidoglycan biosynthesis. Cell wall formation. This Xanthomonas oryzae pv. oryzae (strain PXO99A) protein is UDP-N-acetylenolpyruvoylglucosamine reductase.